Reading from the N-terminus, the 215-residue chain is Nascent polypeptide-associated complex subunit alpha (215 aa).

Residues 1–82 form a disordered region; it reads MPGEATETVP…EKKARKAMSK (82 aa). Residues 9–28 show a composition bias toward polar residues; sequence VPVTEQEMQQPQAETGSGTE. Acidic residues predominate over residues 29 to 42; sequence SDSDESVPDLEEGD. Over residues 44–57 the composition is skewed to low complexity; that stretch reads AQTQTQQAQLAAAA. Residues 70–135 form the NAC-A/B domain; it reads SRSEKKARKA…AKIEDLSQQA (66 aa). At Ser166 the chain carries Phosphoserine. Residues 176-213 form the UBA domain; that stretch reads VEVKDIELVMSQANVSRAKAVRALKNNNNDIVNAIMEL.

Belongs to the NAC-alpha family.

In terms of biological role, may promote appropriate targeting of ribosome-nascent polypeptide complexes. This chain is Nascent polypeptide-associated complex subunit alpha (naca), found in Danio rerio (Zebrafish).